Consider the following 138-residue polypeptide: Large ribosomal subunit protein uL16 (138 aa).

This sequence belongs to the universal ribosomal protein uL16 family. In terms of assembly, part of the 50S ribosomal subunit.

Functionally, binds 23S rRNA and is also seen to make contacts with the A and possibly P site tRNAs. The polypeptide is Large ribosomal subunit protein uL16 (Acidiphilium cryptum (strain JF-5)).